The primary structure comprises 403 residues: tRNA pseudouridine synthase D (403 aa).

Positions 1-10 are enriched in basic and acidic residues; sequence MTVQVQDHDI. Residues 1 to 24 form a disordered region; that stretch reads MTVQVQDHDITTAADTAKLPQPMQ. Catalysis depends on Asp92, which acts as the Nucleophile. Residues 192-354 form the TRUD domain; the sequence is GVPNYFGPQR…IKAQRRALRL (163 aa). The interval 217-240 is disordered; sequence ARPVPESRPQPNKGKRKRVPREQN.

The protein belongs to the pseudouridine synthase TruD family.

The catalysed reaction is uridine(13) in tRNA = pseudouridine(13) in tRNA. Its function is as follows. Responsible for synthesis of pseudouridine from uracil-13 in transfer RNAs. In Psychrobacter arcticus (strain DSM 17307 / VKM B-2377 / 273-4), this protein is tRNA pseudouridine synthase D.